Reading from the N-terminus, the 129-residue chain is NADH dehydrogenase [ubiquinone] 1 beta subcomplex subunit 4 (129 aa).

Serine 2 bears the N-acetylserine mark. The residue at position 26 (serine 26) is a Phosphoserine. A helical membrane pass occupies residues 88-105 (LMGALCGFGPLIFIYYII).

The protein belongs to the complex I NDUFB4 subunit family. As to quaternary structure, complex I is composed of 45 different subunits.

Its subcellular location is the mitochondrion inner membrane. Functionally, accessory subunit of the mitochondrial membrane respiratory chain NADH dehydrogenase (Complex I), that is believed not to be involved in catalysis. Complex I functions in the transfer of electrons from NADH to the respiratory chain. The immediate electron acceptor for the enzyme is believed to be ubiquinone. This Gorilla gorilla gorilla (Western lowland gorilla) protein is NADH dehydrogenase [ubiquinone] 1 beta subcomplex subunit 4 (NDUFB4).